We begin with the raw amino-acid sequence, 299 residues long: Ankyrin repeat domain-containing protein 54 (299 aa).

The disordered stretch occupies residues 1–32 (MAAAAGGADDESRSGRSSSDGECAVAPEPLTG). Residue alanine 2 is modified to N-acetylalanine. Phosphoserine occurs at positions 57 and 62. A Nuclear localization signal (NLS) motif is present at residues 98–116 (RRLGPTGKEVHALKRLRDS). 4 ANK repeats span residues 108–137 (HALK…DPCA), 141–170 (KGRT…DPNQ), 174–203 (LGNT…RVDA), and 207–239 (AGRT…EVKQ). Residues 140-240 (DKGRTALHFA…EAVRLEVKQI (101 aa)) form an LYN-binding region. The Nuclear export signal (NES) motif lies at 282 to 292 (LLASFTSLSLQ).

Interacts (via ankyrin repeat region) with LYN (via SH3-domain) in an activation-independent status of LYN. Forms a multiprotein complex with LYN and HCLS1. Interacts with TSN2, VAV1, DBNL and LASP1.

The protein resides in the nucleus. The protein localises to the cytoplasm. Its subcellular location is the midbody. Plays an important role in regulating intracellular signaling events associated with erythroid terminal differentiation. This is Ankyrin repeat domain-containing protein 54 (ANKRD54) from Bos taurus (Bovine).